Reading from the N-terminus, the 485-residue chain is Glycogen synthase (485 aa).

Lys21 lines the ADP-alpha-D-glucose pocket.

This sequence belongs to the glycosyltransferase 1 family. Bacterial/plant glycogen synthase subfamily.

It carries out the reaction [(1-&gt;4)-alpha-D-glucosyl](n) + ADP-alpha-D-glucose = [(1-&gt;4)-alpha-D-glucosyl](n+1) + ADP + H(+). It participates in glycan biosynthesis; glycogen biosynthesis. Synthesizes alpha-1,4-glucan chains using ADP-glucose. This Pseudomonas savastanoi pv. phaseolicola (strain 1448A / Race 6) (Pseudomonas syringae pv. phaseolicola (strain 1448A / Race 6)) protein is Glycogen synthase.